A 64-amino-acid chain; its full sequence is Small ribosomal subunit protein bS21 (64 aa).

It belongs to the bacterial ribosomal protein bS21 family.

In Flavobacterium johnsoniae (strain ATCC 17061 / DSM 2064 / JCM 8514 / BCRC 14874 / CCUG 350202 / NBRC 14942 / NCIMB 11054 / UW101) (Cytophaga johnsonae), this protein is Small ribosomal subunit protein bS21.